A 611-amino-acid chain; its full sequence is MAVILSVDPCYAGLVGLAEGFRTSNPPRIRECIQCLQAILQFNPPPATQAKTHLQIGRILQQYTKNDDLARRTLEKAVSAELGHGYEEISFEASSILSLVYKDQGQYPLAKQVLRQALEITSGENLYFWQFRLFFQLAEVHACDNEFTASVEVLEMGERIAEQCGSQYMRYNIRHSHNCIIIVLLIMKDVNRVSNILMSTGSFLERWQGQSYQRESLVVFHLLLRVWQLLSVGQAKTVRPYLKQLQQSIQNLTTMTFEGMQPGPNVYEAEKFEWLPREHLCVLVYLVTVMHSMYAGYMDKVLKYSAKALNQVERLKVTSPSALVSVFQLMLLEHTIMCRVVQGQPAHAIKEISQVYQTLKHENCLVRAHKPILHTLLGLYAMSMNLMEQATTHFNIAFKTADNPVLANFVGLNLSIIYIRAGESKQIELSSVMSSIHPSNMATNSHSLQAGYYYVCALRAFFQTRIQDAKKYLRESLKIANAEDLNRLTACSLVLLGHTFLASGNPQEALNMVLPATQLSGKIPDNYIQLWAAGLLRDLYGMLGQPVQASESFHKHHSITKQLIENHMQARKLPEHGLTEWTGAVSPTKSSTIPPQQSFQTWSQPGPSRLS.

TPR repeat units follow at residues 11–46, 91–124, 131–164, 371–404, and 490–523; these read YAGL…NPPP, FEAS…TSGE, FRLF…AEQC, PILH…ADNP, and ACSL…SGKI. The segment at 581 to 611 is disordered; the sequence is WTGAVSPTKSSTIPPQQSFQTWSQPGPSRLS. A compositionally biased stretch (polar residues) spans 585 to 611; sequence VSPTKSSTIPPQQSFQTWSQPGPSRLS.

The protein belongs to the SCC4/mau-2 family. As to quaternary structure, component of the cohesin loading complex.

It localises to the nucleus. Its subcellular location is the nucleoplasm. Required for association of the cohesin complex with chromatin during interphase. Plays a role in sister chromatid cohesion and normal progression through prometaphase. The chain is MAU2 chromatid cohesion factor homolog from Nematostella vectensis (Starlet sea anemone).